Reading from the N-terminus, the 256-residue chain is Ribosomal RNA small subunit methyltransferase A (256 aa).

S-adenosyl-L-methionine is bound by residues His12, Leu14, Gly39, Glu60, Asp81, and Asn103.

The protein belongs to the class I-like SAM-binding methyltransferase superfamily. rRNA adenine N(6)-methyltransferase family. RsmA subfamily.

Its subcellular location is the cytoplasm. The catalysed reaction is adenosine(1518)/adenosine(1519) in 16S rRNA + 4 S-adenosyl-L-methionine = N(6)-dimethyladenosine(1518)/N(6)-dimethyladenosine(1519) in 16S rRNA + 4 S-adenosyl-L-homocysteine + 4 H(+). In terms of biological role, specifically dimethylates two adjacent adenosines (A1518 and A1519) in the loop of a conserved hairpin near the 3'-end of 16S rRNA in the 30S particle. May play a critical role in biogenesis of 30S subunits. The polypeptide is Ribosomal RNA small subunit methyltransferase A (Methylibium petroleiphilum (strain ATCC BAA-1232 / LMG 22953 / PM1)).